The primary structure comprises 327 residues: MTPVPGEVDLLVVGAGPTGLFAAYYAGFRGMSVAVVDALPEPGGQVTAMYPEKMIYDVAGFPEVRGRDLVDALVRQAAQYDPVYLLGRHAEKLSEVEGGLLVDVGERESVRAGAVLVTAGIGEFTPRPLPAADDWLGRGVVHFIPELGAHSGQDVVVVGGGDSAFDWALALHPVARSVTLVHRRARFRAHAGLVDKVRGLGVPLITDAEVAEIRGDDAGPHEVELALAGDRRQVLPAQAVVAALGFTADLGPIESWGLELEKRTIRVDSTMRTSRERVYAAGDVAAYPGKVKLIATGFGEAATAVNNIAVALNPEAHLFPGHSSNMG.

FAD is bound by residues threonine 18, aspartate 37, glutamine 45, tyrosine 50, alanine 90, phenylalanine 124, aspartate 283, and serine 324.

It belongs to the ferredoxin--NADP reductase type 2 family. Homodimer. Requires FAD as cofactor.

The catalysed reaction is 2 reduced [2Fe-2S]-[ferredoxin] + NADP(+) + H(+) = 2 oxidized [2Fe-2S]-[ferredoxin] + NADPH. In Saccharopolyspora erythraea (strain ATCC 11635 / DSM 40517 / JCM 4748 / NBRC 13426 / NCIMB 8594 / NRRL 2338), this protein is Ferredoxin--NADP reductase.